The chain runs to 380 residues: Succinate--CoA ligase [ADP-forming] subunit beta (380 aa).

Residues 9–237 (RDLLARFGIP…PSAEPEAERR (229 aa)) enclose the ATP-grasp domain. Residues Lys-45, 52-54 (GRG), Val-94, and Glu-99 each bind ATP. Positions 192 and 206 each coordinate Mg(2+). Residues Asn-257 and 314 to 316 (GIT) contribute to the substrate site.

The protein belongs to the succinate/malate CoA ligase beta subunit family. Heterotetramer of two alpha and two beta subunits. It depends on Mg(2+) as a cofactor.

It carries out the reaction succinate + ATP + CoA = succinyl-CoA + ADP + phosphate. It catalyses the reaction GTP + succinate + CoA = succinyl-CoA + GDP + phosphate. It participates in carbohydrate metabolism; tricarboxylic acid cycle; succinate from succinyl-CoA (ligase route): step 1/1. Functionally, succinyl-CoA synthetase functions in the citric acid cycle (TCA), coupling the hydrolysis of succinyl-CoA to the synthesis of either ATP or GTP and thus represents the only step of substrate-level phosphorylation in the TCA. The beta subunit provides nucleotide specificity of the enzyme and binds the substrate succinate, while the binding sites for coenzyme A and phosphate are found in the alpha subunit. This Chloroflexus aurantiacus (strain ATCC 29366 / DSM 635 / J-10-fl) protein is Succinate--CoA ligase [ADP-forming] subunit beta.